The following is a 419-amino-acid chain: Pregnancy-specific beta-1-glycoprotein 4 (419 aa).

An N-terminal signal peptide occupies residues 1-34 (MGPLSAPPCTQRITWKGVLLTASLLNFWNPPTTA). The Ig-like V-type domain occupies 35 to 144 (QVTIEAQPPK…TGHFTFTLHL (110 aa)). N-linked (GlcNAc...) asparagine glycosylation is found at asparagine 104, asparagine 111, asparagine 199, asparagine 268, asparagine 299, and asparagine 303. Ig-like C2-type domains lie at 147–234 (PKPS…VTLN), 237–327 (PKLS…VTLN), and 332–410 (PDLP…KSIT). 3 cysteine pairs are disulfide-bonded: cysteine 169–cysteine 217, cysteine 262–cysteine 310, and cysteine 354–cysteine 394.

This sequence belongs to the immunoglobulin superfamily. CEA family.

Its subcellular location is the secreted. The protein is Pregnancy-specific beta-1-glycoprotein 4 (PSG4) of Homo sapiens (Human).